Reading from the N-terminus, the 757-residue chain is Polyribonucleotide nucleotidyltransferase (757 aa).

2 residues coordinate Mg(2+): Asp-487 and Asp-493. The KH domain occupies 554–613 (PRITTVRVKPDQIRLIIGPGGKTIKGIVDQTGVAIDVEDDGTVNVASADSDAVKRALDII). An S1 motif domain is found at 623–691 (GATYKGTVKR…REGKIRLSRR (69 aa)). The tract at residues 697–757 (PEGEEGDRAR…PPRERRERRS (61 aa)) is disordered. Composition is skewed to basic and acidic residues over residues 702-711 (GDRARERMAQ) and 719-757 (PRRDGPGGRGGDRGGDRGSRPGLDRDRGGPPRERRERRS).

The protein belongs to the polyribonucleotide nucleotidyltransferase family. The cofactor is Mg(2+).

The protein localises to the cytoplasm. The catalysed reaction is RNA(n+1) + phosphate = RNA(n) + a ribonucleoside 5'-diphosphate. In terms of biological role, involved in mRNA degradation. Catalyzes the phosphorolysis of single-stranded polyribonucleotides processively in the 3'- to 5'-direction. The polypeptide is Polyribonucleotide nucleotidyltransferase (Sorangium cellulosum (strain So ce56) (Polyangium cellulosum (strain So ce56))).